The primary structure comprises 132 residues: MATRHQARMAVVSLLYAFDLGNGNIAEHTDEILEEKKIRNKQKDFALTLYEGVMANITPVDEAIVKHLKDWDFERLGAIERATLRLATYEILFGELDSAVVINEAVEITKAFGTEQSPKFINGVLDAISKDK.

It belongs to the NusB family.

Its function is as follows. Involved in transcription antitermination. Required for transcription of ribosomal RNA (rRNA) genes. Binds specifically to the boxA antiterminator sequence of the ribosomal RNA (rrn) operons. This Sulfurimonas denitrificans (strain ATCC 33889 / DSM 1251) (Thiomicrospira denitrificans (strain ATCC 33889 / DSM 1251)) protein is Transcription antitermination protein NusB.